The primary structure comprises 470 residues: Uronate isomerase (470 aa).

Belongs to the metallo-dependent hydrolases superfamily. Uronate isomerase family.

The catalysed reaction is D-glucuronate = D-fructuronate. The enzyme catalyses aldehydo-D-galacturonate = keto-D-tagaturonate. It functions in the pathway carbohydrate metabolism; pentose and glucuronate interconversion. The sequence is that of Uronate isomerase from Salmonella paratyphi A (strain ATCC 9150 / SARB42).